Reading from the N-terminus, the 151-residue chain is HTH-type transcriptional regulator FL11 (151 aa).

The HTH asnC-type domain maps to 5-66 (LDDIDKKIIE…VVNPEALGYN (62 aa)). The segment at residues 24-43 (LREISKITGLAESTIHERIK) is a DNA-binding region (H-T-H motif). 98–104 (ETTGDYD) is a binding site for L-arginine. L-lysine contacts are provided by residues N118, D122, and 133-135 (THT). Residues D122 and 133–135 (THT) contribute to the L-arginine site.

In terms of assembly, homodimer. Binds DNA as a dimer and an octamer.

With respect to regulation, in the famine mode, FL11 forms dimers and acts as a repressor, leading to growth arrest. In the feast mode, in the presence of high concentrations of lysine or arginine, four dimers assemble into an octamer and cover the fl11 and lysine biosynthesis promoters. This leads to the inhibition of fl11 expression and lysine biosynthesis, decrease of the FL11 concentration in the cell, derepression of the target genes and activation of the metabolism. Functionally, DNA-binding protein involved in the repression of transcription of a large number of genes, thereby arresting growth, in response to environmental changes. The sequence is that of HTH-type transcriptional regulator FL11 from Pyrococcus furiosus (strain ATCC 43587 / DSM 3638 / JCM 8422 / Vc1).